Reading from the N-terminus, the 342-residue chain is L-threonine 3-dehydrogenase (342 aa).

Cys-38 lines the Zn(2+) pocket. Catalysis depends on charge relay system residues Thr-40 and His-43. The Zn(2+) site is built by His-63, Glu-64, Cys-93, Cys-96, Cys-99, and Cys-107. NAD(+) contacts are provided by residues Ile-175, Asp-195, Arg-200, Leu-262–Ile-264, and Ile-286–Tyr-287.

The protein belongs to the zinc-containing alcohol dehydrogenase family. Homotetramer. It depends on Zn(2+) as a cofactor.

Its subcellular location is the cytoplasm. The enzyme catalyses L-threonine + NAD(+) = (2S)-2-amino-3-oxobutanoate + NADH + H(+). The protein operates within amino-acid degradation; L-threonine degradation via oxydo-reductase pathway; glycine from L-threonine: step 1/2. Its function is as follows. Catalyzes the NAD(+)-dependent oxidation of L-threonine to 2-amino-3-ketobutyrate. The polypeptide is L-threonine 3-dehydrogenase (Burkholderia vietnamiensis (strain G4 / LMG 22486) (Burkholderia cepacia (strain R1808))).